We begin with the raw amino-acid sequence, 787 residues long: Protein FAM149A (787 aa).

Disordered stretches follow at residues 22 to 105, 144 to 175, 189 to 226, 238 to 284, 432 to 455, 573 to 602, and 665 to 697; these read SPAV…SSGA, GSNS…APGP, EEWT…PTNF, ASES…SWRD, DGDE…GLPP, LQQR…ASSR, and AVQT…SYRG. The span at 37–46 shows a compositional bias: polar residues; the sequence is SVDSGASTSL. Low complexity-rich tracts occupy residues 51 to 65 and 96 to 105; these read TLTL…TAAS and SGSLPSSSGA. Positions 144–155 are enriched in polar residues; sequence GSNSVTASSPRN. Residues 189–200 are compositionally biased toward acidic residues; that stretch reads EEWTSDSDSQDD. The segment covering 201–220 has biased composition (basic and acidic residues); sequence PEGRGLSEGLRKQSSEKSKD. Over residues 239–250 the composition is skewed to low complexity; that stretch reads SESPSSFSSSGS. A compositionally biased stretch (polar residues) spans 251-261; the sequence is RTPTEAHNSWP. Residues 262-274 show a composition bias toward low complexity; the sequence is GSSTQSSTTGLST.

It belongs to the FAM149 family.

The polypeptide is Protein FAM149A (Fam149a) (Mus musculus (Mouse)).